The primary structure comprises 209 residues: Mitochondrial import inner membrane translocase subunit Tim23 (209 aa).

3 helical membrane-spanning segments follow: residues 73 to 93 (FELA…FGAL), 125 to 145 (ALWA…GVII), and 181 to 197 (GLAG…YNNW).

It belongs to the Tim17/Tim22/Tim23 family. In terms of assembly, component of the TIM23 complex at least composed of TIMM23, TIMM17 (TIMM17A or TIMM17B) and TIMM50; within this complex, directly interacts with TIMM50. The complex interacts with the TIMM44 component of the PAM complex and with DNAJC15. Upon mitochondrial depolarization, interacts with PINK1; the interaction is required for PINK1 accumulation at the outer mitochondrial membrane, kinase activation by autophosphorylation and PRKN recruitement to mitochondria.

It localises to the mitochondrion inner membrane. In terms of biological role, essential component of the TIM23 complex, a complex that mediates the translocation of transit peptide-containing proteins across the mitochondrial inner membrane. Has a role in the activation of stress-induced mitophagy by protecting PINK1 from OMA1-mediated degradation and facilitating its accumulation at the outer mitochondrial membrane in response to depolarization. The protein is Mitochondrial import inner membrane translocase subunit Tim23 (Timm23) of Rattus norvegicus (Rat).